A 354-amino-acid polypeptide reads, in one-letter code: Protein RecA (354 aa).

67–74 provides a ligand contact to ATP; the sequence is GPESSGKT. The segment at 331–354 is disordered; that stretch reads NQDSTPDFSVDDNGEGVKETNEDF. Residues 345–354 show a composition bias toward basic and acidic residues; the sequence is EGVKETNEDF.

This sequence belongs to the RecA family.

The protein localises to the cytoplasm. In terms of biological role, can catalyze the hydrolysis of ATP in the presence of single-stranded DNA, the ATP-dependent uptake of single-stranded DNA by duplex DNA, and the ATP-dependent hybridization of homologous single-stranded DNAs. It interacts with LexA causing its activation and leading to its autocatalytic cleavage. This is Protein RecA from Citrobacter koseri (strain ATCC BAA-895 / CDC 4225-83 / SGSC4696).